Reading from the N-terminus, the 188-residue chain is 3-hydroxyanthranilate 3,4-dioxygenase 2 (188 aa).

Arginine 46 serves as a coordination point for O2. Positions 50, 70, and 108 each coordinate Fe cation. Glutamate 70 lines the substrate pocket. Residues arginine 112 and glutamate 122 each contribute to the substrate site.

This sequence belongs to the 3-HAO family. Requires Fe(2+) as cofactor.

It localises to the cytoplasm. It carries out the reaction 3-hydroxyanthranilate + O2 = (2Z,4Z)-2-amino-3-carboxymuconate 6-semialdehyde. The protein operates within cofactor biosynthesis; NAD(+) biosynthesis; quinolinate from L-kynurenine: step 3/3. Catalyzes the oxidative ring opening of 3-hydroxyanthranilate to 2-amino-3-carboxymuconate semialdehyde, which spontaneously cyclizes to quinolinate. The sequence is that of 3-hydroxyanthranilate 3,4-dioxygenase 2 (bna1-2) from Aspergillus fumigatus (strain CBS 144.89 / FGSC A1163 / CEA10) (Neosartorya fumigata).